The chain runs to 80 residues: Acyl carrier protein (80 aa).

Positions 4–79 (EAILEKVRSI…DAVKYIEEKQ (76 aa)) constitute a Carrier domain. Ser-39 carries the O-(pantetheine 4'-phosphoryl)serine modification.

The protein belongs to the acyl carrier protein (ACP) family. In terms of processing, 4'-phosphopantetheine is transferred from CoA to a specific serine of apo-ACP by AcpS. This modification is essential for activity because fatty acids are bound in thioester linkage to the sulfhydryl of the prosthetic group.

The protein localises to the cytoplasm. It participates in lipid metabolism; fatty acid biosynthesis. Functionally, carrier of the growing fatty acid chain in fatty acid biosynthesis. The protein is Acyl carrier protein of Prochlorococcus marinus (strain NATL1A).